The chain runs to 236 residues: Activating transcription factor of chaperone (236 aa).

The tract at residues 117–185 (HRASQLASPQ…KNAATRYRQK (69 aa)) is disordered. A compositionally biased stretch (low complexity) spans 120-137 (SQLASPQHSSSSANASPR). Residues 162 to 175 (RPVDDRRSRKKEQN) are compositionally biased toward basic and acidic residues. The region spanning 165-228 (DDRRSRKKEQ…RYLKALMRDL (64 aa)) is the bZIP domain. Residues 167–187 (RRSRKKEQNKNAATRYRQKKK) form a basic motif region. Residues 193 to 228 (LLKEEQTLRQRHTELGEKCSDLQREIRYLKALMRDL) form a leucine-zipper region.

Belongs to the bZIP family. Binds DNA as a dimer.

It localises to the nucleus. Transcriptional activator that acts in the unfolded protein response (UPR) pathway. Acts during endoplasmic reticulum (ER) stress by activating UPR target genes via direct binding to the UPR element (UPRE) (5'-GGAACTGGACAGCGTGTCGAAA-3'). Activates expression of ER chaperones ERP72 and PDI. The sequence is that of Activating transcription factor of chaperone from Bombyx mori (Silk moth).